The following is a 762-amino-acid chain: Phosphoribosylformylglycinamidine synthase subunit PurL (762 aa).

H58 is an active-site residue. The ATP site is built by Y61 and K105. E107 provides a ligand contact to Mg(2+). Substrate contacts are provided by residues 108–111 (SHNH) and R130. H109 serves as the catalytic Proton acceptor. D131 serves as a coordination point for Mg(2+). Q260 provides a ligand contact to substrate. D288 serves as a coordination point for Mg(2+). Position 332-334 (332-334 (ESQ)) interacts with substrate. N520 and G557 together coordinate ATP. N558 lines the Mg(2+) pocket. Position 560 (S560) interacts with substrate.

This sequence belongs to the FGAMS family. As to quaternary structure, monomer. Part of the FGAM synthase complex composed of 1 PurL, 1 PurQ and 2 PurS subunits.

Its subcellular location is the cytoplasm. It catalyses the reaction N(2)-formyl-N(1)-(5-phospho-beta-D-ribosyl)glycinamide + L-glutamine + ATP + H2O = 2-formamido-N(1)-(5-O-phospho-beta-D-ribosyl)acetamidine + L-glutamate + ADP + phosphate + H(+). Its pathway is purine metabolism; IMP biosynthesis via de novo pathway; 5-amino-1-(5-phospho-D-ribosyl)imidazole from N(2)-formyl-N(1)-(5-phospho-D-ribosyl)glycinamide: step 1/2. Its function is as follows. Part of the phosphoribosylformylglycinamidine synthase complex involved in the purines biosynthetic pathway. Catalyzes the ATP-dependent conversion of formylglycinamide ribonucleotide (FGAR) and glutamine to yield formylglycinamidine ribonucleotide (FGAM) and glutamate. The FGAM synthase complex is composed of three subunits. PurQ produces an ammonia molecule by converting glutamine to glutamate. PurL transfers the ammonia molecule to FGAR to form FGAM in an ATP-dependent manner. PurS interacts with PurQ and PurL and is thought to assist in the transfer of the ammonia molecule from PurQ to PurL. The polypeptide is Phosphoribosylformylglycinamidine synthase subunit PurL (Rhodococcus erythropolis (strain PR4 / NBRC 100887)).